The sequence spans 338 residues: Tetraacyldisaccharide 4'-kinase (338 aa).

ATP is bound at residue 53 to 60 (VAGGAGKT).

Belongs to the LpxK family.

The enzyme catalyses a lipid A disaccharide + ATP = a lipid IVA + ADP + H(+). It functions in the pathway glycolipid biosynthesis; lipid IV(A) biosynthesis; lipid IV(A) from (3R)-3-hydroxytetradecanoyl-[acyl-carrier-protein] and UDP-N-acetyl-alpha-D-glucosamine: step 6/6. Transfers the gamma-phosphate of ATP to the 4'-position of a tetraacyldisaccharide 1-phosphate intermediate (termed DS-1-P) to form tetraacyldisaccharide 1,4'-bis-phosphate (lipid IVA). The sequence is that of Tetraacyldisaccharide 4'-kinase from Polaromonas sp. (strain JS666 / ATCC BAA-500).